A 320-amino-acid polypeptide reads, in one-letter code: Ferrochelatase (320 aa).

Fe cation is bound by residues His-194 and Glu-275.

It belongs to the ferrochelatase family. In terms of assembly, monomer.

The protein resides in the cytoplasm. It carries out the reaction heme b + 2 H(+) = protoporphyrin IX + Fe(2+). It functions in the pathway porphyrin-containing compound metabolism; protoheme biosynthesis; protoheme from protoporphyrin-IX: step 1/1. Catalyzes the ferrous insertion into protoporphyrin IX. The chain is Ferrochelatase from Escherichia coli O8 (strain IAI1).